We begin with the raw amino-acid sequence, 157 residues long: Rieske domain-containing protein (157 aa).

The residue at position 1 (Met1) is an N-acetylmethionine. The residue at position 6 (Ser6) is a Phosphoserine. Rieske domains lie at 16 to 94 (SSVC…TGEG) and 17 to 131 (SVCV…NIYV). 4 residues coordinate [2Fe-2S] cluster: Cys57, His59, Cys80, and His83.

The cofactor is [2Fe-2S] cluster.

This Homo sapiens (Human) protein is Rieske domain-containing protein (RFESD).